The sequence spans 137 residues: Large ribosomal subunit protein uL16c (137 aa).

This sequence belongs to the universal ribosomal protein uL16 family. As to quaternary structure, part of the 50S ribosomal subunit.

The protein resides in the plastid. It localises to the chloroplast. The polypeptide is Large ribosomal subunit protein uL16c (Rhodomonas salina (Cryptomonas salina)).